The primary structure comprises 324 residues: Phospho-N-acetylmuramoyl-pentapeptide-transferase (324 aa).

10 helical membrane passes run 9 to 29 (TFAVAFIITVIGVPLFIPFLV), 53 to 73 (TMGAVVFITAMLISFLIFSFI), 77 to 97 (VSAATWLLFIALALFGALGFL), 117 to 137 (FLGQVAISILFYLVYHLNGFA), 147 to 167 (IEVDLGWFFVIFILFWLVGFS), 176 to 196 (LDGLVSGLSVIAFSAFGVIAF), 201 to 221 (MDVAIFCFAIVGGMLGFLLFN), 227 to 247 (IFMGDTGSLALGGSIAAISIL), 253 to 273 (LLLLIGIIFVIETASVILQVF), and 304 to 324 (VLTFWGIGLIGAIISVCVVIF).

This sequence belongs to the glycosyltransferase 4 family. MraY subfamily. Requires Mg(2+) as cofactor.

It localises to the cell membrane. It catalyses the reaction UDP-N-acetyl-alpha-D-muramoyl-L-alanyl-gamma-D-glutamyl-meso-2,6-diaminopimeloyl-D-alanyl-D-alanine + di-trans,octa-cis-undecaprenyl phosphate = di-trans,octa-cis-undecaprenyl diphospho-N-acetyl-alpha-D-muramoyl-L-alanyl-D-glutamyl-meso-2,6-diaminopimeloyl-D-alanyl-D-alanine + UMP. It functions in the pathway cell wall biogenesis; peptidoglycan biosynthesis. In terms of biological role, catalyzes the initial step of the lipid cycle reactions in the biosynthesis of the cell wall peptidoglycan: transfers peptidoglycan precursor phospho-MurNAc-pentapeptide from UDP-MurNAc-pentapeptide onto the lipid carrier undecaprenyl phosphate, yielding undecaprenyl-pyrophosphoryl-MurNAc-pentapeptide, known as lipid I. In Listeria monocytogenes serotype 4b (strain CLIP80459), this protein is Phospho-N-acetylmuramoyl-pentapeptide-transferase.